Consider the following 79-residue polypeptide: Beta-hexatoxin-Mg1a (79 aa).

The signal sequence occupies residues 1–20; sequence MKAPATTLILVMSLISVLWA. Residues 21-50 constitute a propeptide that is removed on maturation; the sequence is TPDLEEGDLLAELGDLIATDDEYPMKPEER. 3 disulfide bridges follow: Cys52-Cys66, Cys59-Cys71, and Cys65-Cys76.

The protein belongs to the neurotoxin 15 family. 01 (magi-5) subfamily. In terms of tissue distribution, expressed by the venom gland.

The protein resides in the secreted. Functionally, insect and vertebrate active toxin. Binds to site 4 of mammalian voltage-gated sodium channels and shifts the activation voltage of the mammalian Nav1.2a/SCN2A channel to more hyperpolarized voltages, whereas the insect channel, DmNav1 (para), is not affected. Competes for binding at site 3 of the insect sodium channel. Causes temporary paralysis when injected into lepidopteran larvae at 8.6 nmol/g. A low intracranial injection dose into mice causes lacrimation, closure of the eyes and sweating. A high injection dose causes extensive lacrimation and death. This Macrothele gigas (Japanese funnel web spider) protein is Beta-hexatoxin-Mg1a.